The chain runs to 158 residues: Glycine/sarcosine/betaine reductase complex component A (158 aa).

Sec-44 is a catalytic residue. A non-standard amino acid (selenocysteine) is located at residue Sec-44.

The protein belongs to the GrdA family. As to quaternary structure, monomer. Component of the glycine, sarcosine and betaine reductase complexes, together with components B and C.

The catalysed reaction is acetyl phosphate + [thioredoxin]-disulfide + NH4(+) + H2O = [thioredoxin]-dithiol + glycine + phosphate + H(+). It catalyses the reaction acetyl phosphate + methylamine + [thioredoxin]-disulfide + H2O = sarcosine + [thioredoxin]-dithiol + phosphate + H(+). It carries out the reaction acetyl phosphate + trimethylamine + [thioredoxin]-disulfide + H2O = glycine betaine + [thioredoxin]-dithiol + phosphate + H(+). Functionally, in the first step of glycine, betaine and sarcosine reductases, the substrate is bound to component PB via a Schiff base intermediate. Then the PB-activated substrate is nucleophilically attacked by the selenol anion of component PA to transform it to a carboxymethylated selenoether and the respective amine. By action of component PC, acetyl phosphate is formed, leaving component PA in its oxidized state. Finally component PA becomes reduced by the thioredoxin system to start a new catalytic cycle of reductive deamination. This is Glycine/sarcosine/betaine reductase complex component A (grdA) from Acetoanaerobium sticklandii (strain ATCC 12662 / DSM 519 / JCM 1433 / CCUG 9281 / NCIMB 10654 / HF) (Clostridium sticklandii).